The following is a 489-amino-acid chain: Glutamyl-tRNA(Gln) amidotransferase subunit A (489 aa).

Active-site charge relay system residues include Lys80 and Ser160. Catalysis depends on Ser184, which acts as the Acyl-ester intermediate.

Belongs to the amidase family. GatA subfamily. Heterotrimer of A, B and C subunits.

It carries out the reaction L-glutamyl-tRNA(Gln) + L-glutamine + ATP + H2O = L-glutaminyl-tRNA(Gln) + L-glutamate + ADP + phosphate + H(+). In terms of biological role, allows the formation of correctly charged Gln-tRNA(Gln) through the transamidation of misacylated Glu-tRNA(Gln) in organisms which lack glutaminyl-tRNA synthetase. The reaction takes place in the presence of glutamine and ATP through an activated gamma-phospho-Glu-tRNA(Gln). The chain is Glutamyl-tRNA(Gln) amidotransferase subunit A from Wolbachia sp. subsp. Brugia malayi (strain TRS).